Here is a 143-residue protein sequence, read N- to C-terminus: Hemoglobin subunit alpha (143 aa).

The Globin domain maps to 2–143 (RFSQDDEVLI…IVHVLISLYR (142 aa)). His60 serves as a coordination point for O2. His89 is a heme b binding site.

This sequence belongs to the globin family. In terms of assembly, heterotetramer of two alpha chains and two beta chains. As to expression, red blood cells.

Functionally, involved in oxygen transport from the lung to the various peripheral tissues. This is Hemoglobin subunit alpha (HBA) from Lepidosiren paradoxus (South American lungfish).